The following is a 252-amino-acid chain: 2-succinyl-6-hydroxy-2,4-cyclohexadiene-1-carboxylate synthase (252 aa).

The protein belongs to the AB hydrolase superfamily. MenH family. As to quaternary structure, monomer.

It catalyses the reaction 5-enolpyruvoyl-6-hydroxy-2-succinyl-cyclohex-3-ene-1-carboxylate = (1R,6R)-6-hydroxy-2-succinyl-cyclohexa-2,4-diene-1-carboxylate + pyruvate. It participates in quinol/quinone metabolism; 1,4-dihydroxy-2-naphthoate biosynthesis; 1,4-dihydroxy-2-naphthoate from chorismate: step 3/7. It functions in the pathway quinol/quinone metabolism; menaquinone biosynthesis. Functionally, catalyzes a proton abstraction reaction that results in 2,5-elimination of pyruvate from 2-succinyl-5-enolpyruvyl-6-hydroxy-3-cyclohexene-1-carboxylate (SEPHCHC) and the formation of 2-succinyl-6-hydroxy-2,4-cyclohexadiene-1-carboxylate (SHCHC). This chain is 2-succinyl-6-hydroxy-2,4-cyclohexadiene-1-carboxylate synthase, found in Shigella dysenteriae serotype 1 (strain Sd197).